Here is a 984-residue protein sequence, read N- to C-terminus: Probable beta-galactosidase C (984 aa).

A signal peptide spans 1–23; the sequence is MRLLSFIYLVWLALLTGTPQVSA. Substrate contacts are provided by Tyr-82, Asn-127, Ala-128, Glu-129, and Asn-187. Glu-188 (proton donor) is an active-site residue. Asn-197 is a glycosylation site (N-linked (GlcNAc...) asparagine). Tyr-251 is a substrate binding site. A disulfide bridge connects residues Cys-257 and Cys-304. Asn-276 carries N-linked (GlcNAc...) asparagine glycosylation. The active-site Nucleophile is Glu-287. Tyr-353 contacts substrate. N-linked (GlcNAc...) asparagine glycosylation is found at Asn-391, Asn-421, Asn-434, Asn-517, Asn-602, Asn-677, Asn-715, Asn-720, Asn-759, and Asn-805.

It belongs to the glycosyl hydrolase 35 family.

The protein resides in the secreted. It catalyses the reaction Hydrolysis of terminal non-reducing beta-D-galactose residues in beta-D-galactosides.. Functionally, cleaves beta-linked terminal galactosyl residues from gangliosides, glycoproteins, and glycosaminoglycans. The chain is Probable beta-galactosidase C (lacC) from Aspergillus flavus (strain ATCC 200026 / FGSC A1120 / IAM 13836 / NRRL 3357 / JCM 12722 / SRRC 167).